A 403-amino-acid chain; its full sequence is Argininosuccinate synthase (403 aa).

A10–S18 provides a ligand contact to ATP. Y87 provides a ligand contact to L-citrulline. G117 is an ATP binding site. Residues T119, N123, and D124 each coordinate L-aspartate. Position 123 (N123) interacts with L-citrulline. Positions 127, 175, 260, and 272 each coordinate L-citrulline.

This sequence belongs to the argininosuccinate synthase family. Type 1 subfamily. As to quaternary structure, homotetramer.

It localises to the cytoplasm. The catalysed reaction is L-citrulline + L-aspartate + ATP = 2-(N(omega)-L-arginino)succinate + AMP + diphosphate + H(+). It functions in the pathway amino-acid biosynthesis; L-arginine biosynthesis; L-arginine from L-ornithine and carbamoyl phosphate: step 2/3. The chain is Argininosuccinate synthase from Bacillus subtilis (strain 168).